The chain runs to 383 residues: 3-phytase (383 aa).

Residues 1–26 (MNHSKTLLLTAAAGLMLTCGAVSSQA) form the signal peptide. A propeptide spanning residues 27-30 (KHKL) is cleaved from the precursor. A BPP domain is found at 31–362 (SDPYHFTVNA…VPWERIADKI (332 aa)). A disordered region spans residues 364 to 383 (FHPQVNKQVDPRKMTDRSGK). Over residues 372-383 (VDPRKMTDRSGK) the composition is skewed to basic and acidic residues.

The protein localises to the secreted. The enzyme catalyses 1D-myo-inositol hexakisphosphate + H2O = 1D-myo-inositol 1,2,4,5,6-pentakisphosphate + phosphate. The polypeptide is 3-phytase (phy) (Bacillus sp. (strain DS11)).